We begin with the raw amino-acid sequence, 376 residues long: MPMPNLPKELVEEILSFVPATYLKRLSATCKPWNRLIHNDKRFARKHYDNAAKEFLVFMMRKNFRIIRRGVNLHGADPSAEVKGELTLPDPYFKNSADEFHIDRVFHCDGLLLCTSKLERRMVVWNPLTGETKWIQTHEEGDNFFLGYSQEDKNISCKKSYKIMGFYRSGSKVWEYDFNSDSWRVLNGILPNWYFDKSYKCVSLKGNTYMLAGAVTDMGFDLSLQSYDFSTEKFAPVSLPVPSQARSLNGANRLSVVRGEKLALLYRRDKRSKAEIWVTNKIDDTTEGAVSWTKVLELDLSRELHALFTSNFLVDEEKKVFICCVSWKEDEDENKSNKVYIVGEDNIVKEIDSGEDATSGCEPTILSLYVPSLVYM.

The region spanning 1 to 46 (MPMPNLPKELVEEILSFVPATYLKRLSATCKPWNRLIHNDKRFARK) is the F-box domain.

This Arabidopsis thaliana (Mouse-ear cress) protein is Putative F-box protein At3g18330.